We begin with the raw amino-acid sequence, 139 residues long: MAVCVAVIAKENYPLYIRSIPTENELKFHYMVHTSLDVVDEKISAMGKALVDQRELYLGLLYPTEDYKVYGYVTNSKVKFVMVVDSSNTALRDNEIRSMFRKLHNSYTDVMCNPFYNPGDRIQSRAFDGMVTSMMIQVC.

It belongs to the TRAPP small subunits family. Sedlin subfamily. As to quaternary structure, component of the multisubunit TRAPP (transport protein particle) complex, which includes at least TRAPPC2, TRAPPC2L, TRAPPC3, TRAPPC3L, TRAPPC4, TRAPPC5, TRAPPC8, TRAPPC9, TRAPPC10, TRAPPC11 and TRAPPC12. Interacts with the heterodimer TRAPPC3-TRAPPC6A.

Its subcellular location is the cytoplasm. It is found in the perinuclear region. It localises to the endoplasmic reticulum. The protein localises to the golgi apparatus. Its function is as follows. May play a role in vesicular transport from endoplasmic reticulum to Golgi. The sequence is that of Trafficking protein particle complex subunit 2-like protein (TRAPPC2L) from Bos taurus (Bovine).